We begin with the raw amino-acid sequence, 419 residues long: Phosphatidylinositol 5-phosphate 4-kinase type-2 gamma (419 aa).

Residues 46–418 (ASDPLISVFM…RFLEFVTNIF (373 aa)) enclose the PIPK domain. Over residues 299–310 (QEEEEDLEEDHT) the composition is skewed to acidic residues. The interval 299–320 (QEEEEDLEEDHTENESSPHMNV) is disordered.

Phosphorylated, phosphorylation is induced by EGF.

Its subcellular location is the endoplasmic reticulum. The protein localises to the cytoplasm. The catalysed reaction is a 1,2-diacyl-sn-glycero-3-phospho-(1D-myo-inositol-5-phosphate) + ATP = a 1,2-diacyl-sn-glycero-3-phospho-(1D-myo-inositol-4,5-bisphosphate) + ADP + H(+). The enzyme catalyses 1,2-dihexadecanoyl-sn-glycero-3-phospho-(1D-myo-inositol-5-phosphate) + ATP = 1,2-dihexadecanoyl-sn-glycero-3-phospho-(1D-myo-inositol-4,5-bisphosphate) + ADP + H(+). It catalyses the reaction 1,2-dihexadecanoyl-sn-glycero-3-phospho-(1D-myo-inositol-5-phosphate) + GTP = 1,2-dihexadecanoyl-sn-glycero-3-phospho-(1D-myo-inositol-4,5-bisphosphate) + GDP + H(+). In terms of biological role, phosphatidylinositol 5-phosphate 4-kinase with low enzymatic activity. May be a GTP sensor, has higher GTP-dependent kinase activity than ATP-dependent kinase activity. The polypeptide is Phosphatidylinositol 5-phosphate 4-kinase type-2 gamma (pip4k2c) (Xenopus tropicalis (Western clawed frog)).